The chain runs to 89 residues: MKAFPTFALLFLVLLFSAHVSDAQHWSYGLRPGGKRDTESLQDMYHETPNEVALFPELERLECSVPQSRLNVLRGALMNWLEGENRKKI.

The N-terminal stretch at 1–23 is a signal peptide; sequence MKAFPTFALLFLVLLFSAHVSDA. Residue Q24 is modified to Pyrrolidone carboxylic acid. G33 is subject to Glycine amide.

Belongs to the GnRH family. Expressed in the forebrain from larval stages.

The protein resides in the secreted. In terms of biological role, stimulates the secretion of gonadotropins. The sequence is that of Progonadoliberin-1 (gnrh1) from Xenopus laevis (African clawed frog).